Consider the following 172-residue polypeptide: Shikimate kinase (172 aa).

Residue 14–19 (GAGKST) coordinates ATP. A Mg(2+)-binding site is contributed by S18. Substrate is bound by residues D36, R60, and G82. Residue R120 participates in ATP binding. A substrate-binding site is contributed by R139. Q156 contacts ATP.

It belongs to the shikimate kinase family. As to quaternary structure, monomer. Requires Mg(2+) as cofactor.

It is found in the cytoplasm. The catalysed reaction is shikimate + ATP = 3-phosphoshikimate + ADP + H(+). Its pathway is metabolic intermediate biosynthesis; chorismate biosynthesis; chorismate from D-erythrose 4-phosphate and phosphoenolpyruvate: step 5/7. Functionally, catalyzes the specific phosphorylation of the 3-hydroxyl group of shikimic acid using ATP as a cosubstrate. The protein is Shikimate kinase of Vibrio vulnificus (strain CMCP6).